The following is a 260-amino-acid chain: 14-3-3-like protein GF14-F (260 aa).

Residues N241 to H260 are disordered. Basic and acidic residues predominate over residues D247–H260.

The protein belongs to the 14-3-3 family. May form a complex with the transcriptional activator VP1 and the bZIP transcription factor EMBP1. Expressed in seedlings, roots and panicles and at lower levels in flag leaves and internodes.

The protein localises to the cytoplasm. The protein resides in the nucleus. Functionally, is associated with a DNA binding complex that binds to the G box, a well-characterized cis-acting DNA regulatory element found in plant genes. The chain is 14-3-3-like protein GF14-F (GF14F) from Oryza sativa subsp. japonica (Rice).